A 348-amino-acid chain; its full sequence is Anthranilate phosphoribosyltransferase (348 aa).

5-phospho-alpha-D-ribose 1-diphosphate-binding positions include Gly81, 84-85, Thr89, 91-94, 109-117, and Ser121; these read GD, NIST, and KHGNRSSSG. Position 81 (Gly81) interacts with anthranilate. Ser93 is a Mg(2+) binding site. Position 112 (Asn112) interacts with anthranilate. Arg167 is an anthranilate binding site. Positions 226 and 227 each coordinate Mg(2+).

It belongs to the anthranilate phosphoribosyltransferase family. In terms of assembly, homodimer. Requires Mg(2+) as cofactor.

It catalyses the reaction N-(5-phospho-beta-D-ribosyl)anthranilate + diphosphate = 5-phospho-alpha-D-ribose 1-diphosphate + anthranilate. The protein operates within amino-acid biosynthesis; L-tryptophan biosynthesis; L-tryptophan from chorismate: step 2/5. Functionally, catalyzes the transfer of the phosphoribosyl group of 5-phosphorylribose-1-pyrophosphate (PRPP) to anthranilate to yield N-(5'-phosphoribosyl)-anthranilate (PRA). The polypeptide is Anthranilate phosphoribosyltransferase (Nitrosopumilus maritimus (strain SCM1)).